The primary structure comprises 3011 residues: Genome polyprotein (3011 aa).

S2 bears the N-acetylserine; by host mark. An interaction with STAT1 region spans residues 2–23 (STNPKPQRKTKRNTNRRPQDVK). Positions 2–58 (STNPKPQRKTKRNTNRRPQDVKFPGGGQIVGGVYLLPRRGPRVGVRATRKTSERSQP) are interaction with EIF2AK2/PKR. An interaction with DDX3X region spans residues 2–59 (STNPKPQRKTKRNTNRRPQDVKFPGGGQIVGGVYLLPRRGPRVGVRATRKTSERSQPR). The disordered stretch occupies residues 2–75 (STNPKPQRKT…PKARRPEGRS (74 aa)). Topologically, residues 2-168 (STNPKPQRKT…EDGVNYATGN (167 aa)) are cytoplasmic. 2 short sequence motifs (nuclear localization signal) span residues 5–13 (PKPQRKTKR) and 38–43 (PRRGPR). Positions 7 to 16 (PQRKTKRNTN) are enriched in basic residues. Position 53 is a phosphoserine; by host (S53). Short sequence motifs (nuclear localization signal) lie at residues 58–64 (PRGRRQP) and 66–71 (PKARRP). The span at 58–68 (PRGRRQPIPKA) shows a compositional bias: basic residues. S99 carries the phosphoserine; by host modification. The segment at 112–152 (PRRRSRNLGKVIDTLTCGFADLMGYIPLVGAPLGGAARALA) is important for endoplasmic reticulum and mitochondrial localization. A Phosphoserine; by host PKA modification is found at S116. The segment at 122–173 (VIDTLTCGFADLMGYIPLVGAPLGGAARALAHGVRVLEDGVNYATGNLPGCS) is interaction with APOA2. Residues 164-167 (YATG) are important for lipid droplets localization. The helical transmembrane segment at 169-189 (LPGCSFSIFLLALLSCLTVPA) threads the bilayer. Positions 178-191 (LLALLSCLTVPASA) are cleaved as a propeptide — ER anchor for the core protein, removed in mature form by host signal peptidase. The Lumenal portion of the chain corresponds to 190-358 (SAVGVRNSSG…AGAHWGVLAG (169 aa)). 3 N-linked (GlcNAc...) asparagine; by host glycosylation sites follow: N196, N209, and N234. The segment at 265-296 (IVGAAAFCSAMYVGDLCGSIFLVGQIFTFSPR) is important for fusion. N305 carries N-linked (GlcNAc...) asparagine; by host glycosylation. The helical transmembrane segment at 359-379 (LAYYSMVGNWAKVVVVLLLFA) threads the bilayer. The Lumenal portion of the chain corresponds to 380–725 (GVDAETRVTG…WEYVVLLFLL (346 aa)). An HVR1 region spans residues 385–411 (TRVTGGAAGHTAFGFASFLAPGAKQKI). 4 N-linked (GlcNAc...) (high mannose) asparagine; by host glycosylation sites follow: N417, N423, N430, and N448. 4 disulfide bridges follow: C429/C552, C452/C459, C486/C494, and C503/C508. The interval 474–479 (HEGNAS) is HVR2. The segment at 480–493 (DDQRPYCWHYALRP) is CD81-binding 1. N-linked (GlcNAc...) (high mannose) asparagine; by host glycosylation is present at N532. The N-linked (GlcNAc...) asparagine; by host glycan is linked to N540. Residues 544–551 (PPMGNWFG) form a CD81-binding 2 region. N556 carries N-linked (GlcNAc...) (high mannose) asparagine; by host glycosylation. C564 and C569 are oxidised to a cystine. N576 carries N-linked (GlcNAc...) (high mannose) asparagine; by host glycosylation. 3 cysteine pairs are disulfide-bonded: C581–C585, C597–C620, and C607–C644. N-linked (GlcNAc...) (high mannose) asparagine; by host glycosylation is found at N623 and N645. An intrachain disulfide couples C652 to C677. The segment at 660-671 (AELSPLLLSTTQ) is PKR/eIF2-alpha phosphorylation homology domain (PePHD). Residues 726-746 (LADARICACLWMMLLISQVEA) traverse the membrane as a helical segment. The Lumenal segment spans residues 747-757 (ALENLIVLNAA). Residues 758-778 (SLVGTHGIVPFFIFFCAAWYL) form a helical membrane-spanning segment. Residues 779–781 (KGK) are Cytoplasmic-facing. Residues 782–803 (WAPGLAYSVYGMWPLLLLLLAL) form a helical membrane-spanning segment. Residues 804–813 (PQRAYALDQE) lie on the Lumenal side of the membrane. Residues 814 to 834 (LAASCGATVFICLAVLTLSPY) traverse the membrane as a helical segment. Over 835–838 (YKQY) the chain is Cytoplasmic. The helical transmembrane segment at 839–859 (MARGIWWLQYMLTRAEALLQV) threads the bilayer. Residues 860–881 (WVPPLNARGGRDGVVLLTCVLH) lie on the Lumenal side of the membrane. A helical membrane pass occupies residues 882 to 902 (PHLLFEITKIMLAILGPLWIL). A Peptidase C18 domain is found at 903–1026 (QASLLKVPYF…ALTDKGWRLL (124 aa)). Topologically, residues 903 to 1657 (QASLLKVPYF…CMSADLEVVT (755 aa)) are cytoplasmic. Positions 904 to 1206 (ASLLKVPYFV…PVESLETTMR (303 aa)) are protease NS2-3. C922 carries S-palmitoyl cysteine; by host lipidation. Residues 929–949 (AGGQYVQMALLKLGAFAGTYI) form an interaction with host SCPS1 region. Residues H952, E972, and C993 each act as for protease NS2 activity; shared with dimeric partner in the active site. The Peptidase S29 domain maps to 1027–1208 (APITAYAQQT…ESLETTMRSP (182 aa)). Residues H1083 and D1107 each act as charge relay system; for serine protease NS3 activity in the active site. Residues C1123 and C1125 each coordinate Zn(2+). Catalysis depends on S1165, which acts as the Charge relay system; for serine protease NS3 activity. Zn(2+) contacts are provided by C1171 and H1175. The Helicase ATP-binding domain maps to 1217–1369 (PTVPQSYQVA…SNIEEVALST (153 aa)). 1230–1237 (APTGSGKS) is an ATP binding site. 2 residues coordinate Mg(2+): S1237 and E1317. A DECH box motif is present at residues 1316–1319 (DECH). Residues 1486 to 1497 (QRRGRTGRGKHG) are RNA-binding. The helical transmembrane segment at 1658–1678 (STWVLVGGVLAALAAYCLSTG) threads the bilayer. An NS3-binding region spans residues 1679-1690 (SVVIVGRIILSG). Residues 1679–1805 (SVVIVGRIIL…AVTSPLTTQQ (127 aa)) lie on the Cytoplasmic side of the membrane. Residues 1806-1824 (TLLFNILGGWVAAQLAAPA) form a helical membrane-spanning segment. Over 1825–1828 (AATA) the chain is Lumenal. A helical transmembrane segment spans residues 1829-1849 (FVGAGITGAVIGSVGLGKVLV). D1850 is a topological domain (cytoplasmic). A helical membrane pass occupies residues 1851–1871 (ILAGYGAGVAGALVAFKIMSG). The Lumenal segment spans residues 1872–1881 (EAPTAEDLVN). Residues 1882 to 1902 (LLPAILSPGALVVGVVCAAIL) traverse the membrane as a helical segment. Over 1903 to 1972 (RRHVGPGEGA…WISSDCTAPC (70 aa)) the chain is Cytoplasmic. S-palmitoyl cysteine; by host attachment occurs at residues C1968 and C1972. An intramembrane segment occupies 1973-2002 (AGSWLKDVWDWICEVLSDFKSWLKAKLMPQ). At 2003–2990 (LPGIPFVSCQ…YHSVSHVRPR (988 aa)) the chain is on the cytoplasmic side. Zn(2+)-binding residues include C2011, C2029, C2031, and C2052. An FKBP8-binding region spans residues 2120-2208 (EFFTEVDGVR…ASSSASQLSA (89 aa)). The interval 2120-2332 (EFFTEVDGVR…PVPPPRRKRT (213 aa)) is transcriptional activation. Residues 2135 to 2139 (PPCKP) form an interaction with non-structural protein 4A region. Residues 2189 to 2441 (RLNRGSPPSL…TPCAAEETKL (253 aa)) form an interaction with host SKP2 region. The residue at position 2194 (S2194) is a Phosphoserine; by host; in p56. A phosphoserine; by host; in p58 mark is found at S2197, S2201, S2204, S2207, and S2210. Positions 2210–2249 (SLKATCTTHHDSPDADLITANLLWRQEMGGNITRVESENK) are ISDR. An interaction with EIF2AK2/PKR region spans residues 2210–2275 (SLKATCTTHH…REISVPAEIL (66 aa)). The NS4B-binding stretch occupies residues 2249-2306 (KIVILDSFDPLVAEEDDREISVPAEILLKSKKFPPAMPIWARPDYNPPLVEPWKRPDY). The short motif at 2322 to 2325 (TPVP) is the SH3-binding element. The Nuclear localization signal signature appears at 2326 to 2334 (PPRRKRTVV). K2350 participates in a covalent cross-link: Glycyl lysine isopeptide (Lys-Gly) (interchain with G-Cter in ubiquitin). Over residues 2352 to 2373 (FGSSTTSGVTSGEAAESSPAPS) the composition is skewed to low complexity. Positions 2352–2409 (FGSSTTSGVTSGEAAESSPAPSCDGELDSEAESYSSMPPLEGEPGDPDLSDGSWSTVS) are disordered. A V3 region spans residues 2354-2377 (SSTTSGVTSGEAAESSPAPSCDGE). Phosphoserine; by host occurs at positions 2449 and 2462. Positions 2634-2752 (PMGFSYDTRC…ICESAGVQED (119 aa)) constitute a RdRp catalytic domain. Mg(2+)-binding residues include D2640, D2738, and D2739. Residues 2991–3011 (WFFWCLLLLSVGVGIYLLPNR) traverse the membrane as a helical segment.

This sequence belongs to the hepacivirus polyprotein family. In terms of assembly, homooligomer. Interacts with E1 (via C-terminus). Interacts with the non-structural protein 5A. Interacts (via N-terminus) with host STAT1 (via SH2 domain); this interaction results in decreased STAT1 phosphorylation and ubiquitin-mediated proteasome-dependent STAT1 degradation, leading to decreased IFN-stimulated gene transcription. Interacts with host STAT3; this interaction constitutively activates STAT3. Interacts with host LTBR receptor. Interacts with host TNFRSF1A receptor and possibly induces apoptosis. Interacts with host HNRPK. Interacts with host YWHAE. Interacts with host UBE3A/E6AP. Interacts with host DDX3X. Interacts with host APOA2. Interacts with host RXRA protein. Interacts with host SP110 isoform 3/Sp110b; this interaction sequesters the transcriptional corepressor SP110 away from the nucleus. Interacts with host CREB3 nuclear transcription protein; this interaction triggers cell transformation. Interacts with host ACY3. Interacts with host C1QR1. Interacts with host RBM24; this interaction, which enhances the interaction of the mature core protein with 5'-UTR, may inhibit viral translation and favor replication. Interacts with host EIF2AK2/PKR; this interaction induces the autophosphorylation of EIF2AK2. Part of the viral assembly initiation complex composed of NS2, E1, E2, NS3, NS4A, NS5A and the mature core protein. As to quaternary structure, forms a heterodimer with envelope glycoprotein E2. Interacts with mature core protein. Interacts with protease NS2. The heterodimer E1/E2 interacts with host CLDN1; this interaction plays a role in viral entry into host cell. Interacts with host SPSB2 (via C-terminus). Part of the viral assembly initiation complex composed of NS2, E1, E2, NS3, NS4A, NS5A and the mature core protein. Interacts with host NEURL3; this interaction prevents E1 binding to glycoprotein E2. Forms a heterodimer with envelope glycoprotein E1. Interacts with host CD81 and SCARB1 receptors; these interactions play a role in viral entry into host cell. Interacts with host EIF2AK2/PKR; this interaction inhibits EIF2AK2 and probably allows the virus to evade the innate immune response. Interacts with host CD209/DC-SIGN and CLEC4M/DC-SIGNR. Interact with host SPCS1; this interaction is essential for viral particle assembly. Interacts with protease NS2. The heterodimer E1/E2 interacts with host CLDN1; this interaction plays a role in viral entry into host cell. Part of the viral assembly initiation complex composed of NS2, E1, E2, NS3, NS4A, NS5A and the mature core protein. Interacts with host SLC3A2/4F2hc; the interaction may facilitate viral entry into host cell. Interacts with human PLSCR1. In terms of assembly, homohexamer. Homoheptamer. Interacts with protease NS2. As to quaternary structure, homodimer. Interacts with host SPCS1; this interaction is essential for viral particle assembly. Interacts with envelope glycoprotein E1. Interacts with envelope glycoprotein E2. Interacts with viroporin p7. Interacts with serine protease/helicase NS3. Part of the replication complex composed of NS2, NS3, NS4A, NS4B, NS5A and the RNA-directed RNA polymerase embedded in an ER-derived membranous web. Part of the viral assembly initiation complex composed of NS2, E1, E2, NS3, NS4A, NS5A and the mature core protein. Interacts with protease NS2. Interacts with non-structural protein 4A; this interaction stabilizes the folding of NS3 serine protease. NS3-NS4A interaction is essential for NS3 activation and allows membrane anchorage of the latter. NS3/NS4A complex also prevents phosphorylation of host IRF3, thus preventing the establishment of dsRNA induced antiviral state. Interacts with host MAVS; this interaction leads to the cleavage and inhibition of host MAVS. Interacts with host TICAM1; this interaction leads to the cleavage and inhibition of host TICAM1. Interacts with host TANK-binding kinase/TBK1; this interaction results in the inhibition of the association between TBK1 and IRF3, which leads to the inhibition of IRF3 activation. Interacts with host RBM24. Part of the replication complex composed of NS2, NS3, NS4A, NS4B, NS5A and the RNA-directed RNA polymerase embedded in an ER-derived membranous web. Part of the viral assembly initiation complex composed of NS2, E1, E2, NS3, NS4A, NS5A and the mature core protein. In terms of assembly, interacts with NS3 serine protease; this interaction stabilizes the folding of NS3 serine protease. NS3-NS4A interaction is essential for NS3 activation and allows membrane anchorage of the latter. Interacts with non-structural protein 5A (via N-terminus). Part of the replication complex composed of NS2, NS3, NS4A, NS4B, NS5A and the RNA-directed RNA polymerase embedded in an ER-derived membranous web. Part of the viral assembly initiation complex composed of NS2, E1, E2, NS3, NS4A, NS5A and the mature core protein. As to quaternary structure, homomultimer. Interacts with non-structural protein NS5A. Interacts with host PLA2G4C; this interaction likely initiates the recruitment of replication complexes to lipid droplets. Interacts with host STING; this interaction disrupts the interaction between STING and TBK1 thereby suppressing the interferon signaling. Part of the replication complex composed of NS2, NS3, NS4A, NS4B, NS5A and the RNA-directed RNA polymerase embedded in an ER-derived membranous web. Monomer. Homodimer; dimerization is required for RNA-binding. Interacts with the mature core protein. Interacts (via N-terminus) with non-structural protein 4A. Interacts with non-structural protein 4B. Interacts (via region D2) with RNA-directed RNA polymerase. Part of the viral assembly initiation complex composed of NS2, E1, E2, NS3, NS4A, NS5A and the mature core protein. Part of the replication complex composed of NS2, NS3, NS4A, NS4B, NS5A and the RNA-directed RNA polymerase embedded in an ER-derived membranous web. Interacts with host GRB2. Interacts with host BIN1. Interacts with host PIK3R1. Interacts with host SRCAP. Interacts with host FKBP8. Interacts (via C-terminus) with host VAPB (via MSP domain). Interacts with host EIF2AK2/PKR; this interaction leads to disruption of EIF2AK2 dimerization by NS5A and probably allows the virus to evade the innate immune response. Interacts (via N-terminus) with host PACSIN2 (via N-terminus); this interaction attenuates protein kinase C alpha-mediated phosphorylation of PACSIN2 by disrupting the interaction between PACSIN2 and PRKCA. Interacts (via N-terminus) with host SRC kinase (via SH2 domain). Interacts with most Src-family kinases. Interacts with host IFI27 and SKP2; promotes the ubiquitin-mediated proteasomal degradation of NS5A. Interacts with host GPS2. Interacts with host TNFRSF21; this interaction allows the modulation by the virus of JNK, p38 MAPK, STAT3, and Akt signaling pathways in a DR6-dependent manner. Interacts (via N-terminus) with host CIDEB (via N-terminus); this interaction seems to regulate the association of HCV particles with APOE. Interacts with host CHKA/Choline Kinase-alpha; CHKA bridges host PI4KA and NS5A and potentiates NS5A-stimulated PI4KA activity, which then facilitates the targeting of the ternary complex to the ER for viral replication. Interacts with host SPSB2 (via C-terminus); this interaction targets NS5A for ubiquitination and degradation. Interacts with host RAB18; this interaction may promote the association of NS5A and other replicase components with lipid droplets. Interacts (via region D2) with host PPIA/CYPA; the interaction stimulates RNA-binding ability of NS5A and is dependent on the peptidyl-prolyl cis-trans isomerase activity of PPIA/CYPA. Interacts with host TRIM14; this interaction induces the degradation of NS5A. In terms of assembly, homooligomer. Interacts with non-structural protein 5A. Interacts with host VAPB. Interacts with host PRK2/PKN2. Interacts with host HNRNPA1 and SEPT6; these interactions facilitate viral replication. Part of the replication complex composed of NS2, NS3, NS4A, NS4B, NS5A and the RNA-directed RNA polymerase. The cofactor is Zn(2+). Mg(2+) serves as cofactor. Specific enzymatic cleavages in vivo yield mature proteins. The structural proteins, core, E1, E2 and p7 are produced by proteolytic processing by host signal peptidases. The core protein precursor is synthesized as a 23 kDa, which is retained in the ER membrane through the hydrophobic signal peptide. Cleavage by the signal peptidase releases the 21 kDa mature core protein. The cleavage of the core protein precursor occurs between aminoacids 176 and 188 but the exact cleavage site is not known. Some degraded forms of the core protein appear as well during the course of infection. The other proteins (p7, NS2, NS3, NS4A, NS4B, NS5A and NS5B) are cleaved by the viral proteases. Autoprocessing between NS2 and NS3 is mediated by the NS2 cysteine protease catalytic domain and regulated by the NS3 N-terminal domain. Post-translationally, phosphorylated by host PKC and PKA. In terms of processing, ubiquitinated; mediated by UBE3A and leading to core protein subsequent proteasomal degradation. Highly N-glycosylated. Post-translationally, palmitoylation is required for NS2/3 autoprocessing and E2 recruitment to membranes. In terms of processing, palmitoylated. This modification may play a role in its polymerization or in protein-protein interactions. Phosphorylated on serines in a basal form termed p56. p58 is a hyperphosphorylated form of p56. p56 and p58 coexist in the cell in roughly equivalent amounts. Hyperphosphorylation is dependent on the presence of NS4A. Host CSNK1A1/CKI-alpha or RPS6KB1 kinases may be responsible for NS5A phosphorylation. Post-translationally, tyrosine phosphorylation is essential for the interaction with host SRC. In terms of processing, the N-terminus is phosphorylated by host PRK2/PKN2.

It is found in the host endoplasmic reticulum membrane. The protein resides in the host mitochondrion membrane. It localises to the virion. Its subcellular location is the host cytoplasm. The protein localises to the host nucleus. It is found in the host lipid droplet. The protein resides in the virion membrane. It localises to the host mitochondrion. Its subcellular location is the host cell membrane. The protein localises to the host perinuclear region. It catalyses the reaction Hydrolysis of four peptide bonds in the viral precursor polyprotein, commonly with Asp or Glu in the P6 position, Cys or Thr in P1 and Ser or Ala in P1'.. It carries out the reaction a ribonucleoside 5'-triphosphate + H2O = a ribonucleoside 5'-diphosphate + phosphate + H(+). The enzyme catalyses ATP + H2O = ADP + phosphate + H(+). The catalysed reaction is RNA(n) + a ribonucleoside 5'-triphosphate = RNA(n+1) + diphosphate. With respect to regulation, inhibited by the antiviral drug hexamethylene amiloride. Inhibition by amantadine appears to be genotype-dependent. Also inhibited by long-alkyl-chain iminosugar derivatives. Its activity is regulated as follows. Activity is up-regulated by PRK2/PKN2-mediated phosphorylation. In terms of biological role, packages viral RNA to form a viral nucleocapsid, and promotes virion budding. Participates in the viral particle production as a result of its interaction with the non-structural protein 5A. Binds RNA and may function as a RNA chaperone to induce the RNA structural rearrangements taking place during virus replication. Modulates viral translation initiation by interacting with viral IRES and 40S ribosomal subunit. Affects various cell signaling pathways, host immunity and lipid metabolism. Prevents the establishment of cellular antiviral state by blocking the interferon-alpha/beta (IFN-alpha/beta) and IFN-gamma signaling pathways and by blocking the formation of phosphorylated STAT1 and promoting ubiquitin-mediated proteasome-dependent degradation of STAT1. Activates STAT3 leading to cellular transformation. Regulates the activity of cellular genes, including c-myc and c-fos. May repress the promoter of p53, and sequester CREB3 and SP110 isoform 3/Sp110b in the cytoplasm. Represses cell cycle negative regulating factor CDKN1A, thereby interrupting an important check point of normal cell cycle regulation. Targets transcription factors involved in the regulation of inflammatory responses and in the immune response: suppresses TNF-induced NF-kappa-B activation, and activates AP-1. Binds to dendritic cells (DCs) via C1QR1, resulting in down-regulation of T-lymphocytes proliferation. Alters lipid metabolism by interacting with hepatocellular proteins involved in lipid accumulation and storage. Induces up-regulation of FAS promoter activity, and thereby contributes to the increased triglyceride accumulation in hepatocytes (steatosis). Forms a heterodimer with envelope glycoprotein E2, which mediates virus attachment to the host cell, virion internalization through clathrin-dependent endocytosis and fusion with host membrane. Fusion with the host cell is most likely mediated by both E1 and E2, through conformational rearrangements of the heterodimer required for fusion rather than a classical class II fusion mechanism. E1/E2 heterodimer binds host apolipoproteins such as APOB and ApoE thereby forming a lipo-viro-particle (LVP). APOE associated to the LVP allows the initial virus attachment to cell surface receptors such as the heparan sulfate proteoglycans (HSPGs), syndecan-1 (SDC1), syndecan-1 (SDC2), the low-density lipoprotein receptor (LDLR) and scavenger receptor class B type I (SCARB1). The cholesterol transfer activity of SCARB1 allows E2 exposure and binding of E2 to SCARB1 and the tetraspanin CD81. E1/E2 heterodimer binding on CD81 activates the epithelial growth factor receptor (EGFR) signaling pathway. Diffusion of the complex E1-E2-EGFR-SCARB1-CD81 to the cell lateral membrane allows further interaction with Claudin 1 (CLDN1) and occludin (OCLN) to finally trigger HCV entry. Functionally, forms a heterodimer with envelope glycoprotein E1, which mediates virus attachment to the host cell, virion internalization through clathrin-dependent endocytosis and fusion with host membrane. Fusion with the host cell is most likely mediated by both E1 and E2, through conformational rearrangements of the heterodimer required for fusion rather than a classical class II fusion mechanism. The interaction between envelope glycoprotein E2 and host apolipoprotein E/APOE allows the proper assembly, maturation and infectivity of the viral particles. This interaction is probably promoted via the up-regulation of cellular autophagy by the virus. E1/E2 heterodimer binds host apolipoproteins such as APOB and APOE thereby forming a lipo-viro-particle (LVP). APOE associated to the LVP allows the initial virus attachment to cell surface receptors such as the heparan sulfate proteoglycans (HSPGs), syndecan-1 (SDC1), syndecan-1 (SDC2), the low-density lipoprotein receptor (LDLR) and scavenger receptor class B type I (SCARB1). The cholesterol transfer activity of SCARB1 allows E2 exposure and binding of E2 to SCARB1 and the tetraspanin CD81. E1/E2 heterodimer binding on CD81 activates the epithelial growth factor receptor (EGFR) signaling pathway. Diffusion of the complex E1-E2-EGFR-SCARB1-CD81 to the cell lateral membrane allows further interaction with Claudin 1 (CLDN1) and occludin (OCLN) to finally trigger HCV entry. Inhibits host EIF2AK2/PKR activation, preventing the establishment of an antiviral state. Viral ligand for CD209/DC-SIGN and CLEC4M/DC-SIGNR, which are respectively found on dendritic cells (DCs), and on liver sinusoidal endothelial cells and macrophage-like cells of lymph node sinuses. These interactions allow the capture of circulating HCV particles by these cells and subsequent facilitated transmission to permissive cells such as hepatocytes and lymphocyte subpopulations. The interaction between E2 and host amino acid transporter complex formed by SLC3A2 and SLC7A5/LAT1 may facilitate viral entry into host cell. Its function is as follows. Ion channel protein that acts as a viroporin and plays an essential role in the assembly, envelopment and secretion of viral particles. Regulates the host cell secretory pathway, which induces the intracellular retention of viral glycoproteins and favors assembly of viral particles. Creates a pore in acidic organelles and releases Ca(2+) and H(+) in the cytoplasm of infected cells, leading to a productive viral infection. High levels of cytoplasmic Ca(2+) may trigger membrane trafficking and transport of viral ER-associated proteins to viroplasms, sites of viral genome replication. This ionic imbalance induces the assembly of the inflammasome complex, which triggers the maturation of pro-IL-1beta into IL-1beta through the action of caspase-1. Targets also host mitochondria and induces mitochondrial depolarization. In addition of its role as a viroporin, acts as a lipid raft adhesion factor. In terms of biological role, cysteine protease required for the proteolytic auto-cleavage between the non-structural proteins NS2 and NS3. The N-terminus of NS3 is required for the function of NS2 protease (active region NS2-3). Promotes the initiation of viral particle assembly by mediating the interaction between structural and non-structural proteins. Displays three enzymatic activities: serine protease with a chymotrypsin-like fold, NTPase and RNA helicase. NS3 serine protease, in association with NS4A, is responsible for the cleavages of NS3-NS4A, NS4A-NS4B, NS4B-NS5A and NS5A-NS5B. The NS3/NS4A complex prevents phosphorylation of host IRF3, thus preventing the establishment of dsRNA induced antiviral state. The NS3/NS4A complex induces host amino acid transporter component SLC3A2, thus contributing to HCV propagation. NS3 RNA helicase binds to RNA and unwinds both dsDNA and dsRNA in the 3' to 5' direction, and likely resolves RNA complicated stable secondary structures in the template strand. Binds a single ATP and catalyzes the unzipping of a single base pair of dsRNA. Inhibits host antiviral proteins TBK1 and IRF3 thereby preventing the establishment of an antiviral state. Cleaves host MAVS/CARDIF thereby preventing the establishment of an antiviral state. Cleaves host TICAM1/TRIF, thereby disrupting TLR3 signaling and preventing the establishment of an antiviral state. Functionally, induces a specific membrane alteration that serves as a scaffold for the virus replication complex. This membrane alteration gives rise to the so-called ER-derived membranous web that contains the replication complex. NS4B self-interaction contributes to its function in membranous web formation. Promotes host TRIF protein degradation in a CASP8-dependent manner thereby inhibiting host TLR3-mediated interferon signaling. Disrupts the interaction between STING and TBK1 contributing to the inhibition of interferon signaling. Its function is as follows. Phosphorylated protein that is indispensable for viral replication and assembly. Both hypo- and hyperphosphorylated states are required for the viral life cycle. The hyperphosphorylated form of NS5A is an inhibitor of viral replication. Involved in RNA-binding and especially in binding to the viral genome. Zinc is essential for RNA-binding. Participates in the viral particle production as a result of its interaction with the mature viral core protein. Its interaction with host VAPB may target the viral replication complex to vesicles. Down-regulates viral IRES translation initiation. Mediates interferon resistance, presumably by interacting with and inhibiting host EIF2AK2/PKR. Prevents BIN1-induced apoptosis. Acts as a transcriptional activator of some host genes important for viral replication when localized in the nucleus. Via the interaction with host PACSIN2, modulates lipid droplet formation in order to promote virion assembly. Modulates TNFRSF21/DR6 signaling pathway for viral propagation. In terms of biological role, RNA-dependent RNA polymerase that performs primer-template recognition and RNA synthesis during viral replication. Initiates RNA transcription/replication at a flavin adenine dinucleotide (FAD), resulting in a 5'- FAD cap on viral RNAs. In this way, recognition of viral 5' RNA by host pattern recognition receptors can be bypassed, thereby evading activation of antiviral pathways. This Homo sapiens (Human) protein is Genome polyprotein.